Consider the following 90-residue polypeptide: uncharacterized protein (90 aa).

The N-terminal stretch at 1 to 20 is a signal peptide; the sequence is MEKLFVLVFALALLAFSSDA.

It is found in the secreted. This is an uncharacterized protein from Mus musculus (Mouse).